The sequence spans 403 residues: Dual-specificity RNA methyltransferase RlmN (403 aa).

The disordered stretch occupies residues 1-25; it reads MTKIPMQPADSTPATFHPNAPTKTN. Glu-112 acts as the Proton acceptor in catalysis. The region spanning 123 to 364 is the Radical SAM core domain; that stretch reads VNGRKTLCIS…VCTIRQTRGD (242 aa). An intrachain disulfide couples Cys-130 to Cys-370. Residues Cys-137, Cys-141, and Cys-144 each coordinate [4Fe-4S] cluster. S-adenosyl-L-methionine is bound by residues 193–194, Ser-225, 247–249, and Asn-327; these read GE and SLH. Catalysis depends on Cys-370, which acts as the S-methylcysteine intermediate.

The protein belongs to the radical SAM superfamily. RlmN family. [4Fe-4S] cluster serves as cofactor.

The protein localises to the cytoplasm. It carries out the reaction adenosine(2503) in 23S rRNA + 2 reduced [2Fe-2S]-[ferredoxin] + 2 S-adenosyl-L-methionine = 2-methyladenosine(2503) in 23S rRNA + 5'-deoxyadenosine + L-methionine + 2 oxidized [2Fe-2S]-[ferredoxin] + S-adenosyl-L-homocysteine. It catalyses the reaction adenosine(37) in tRNA + 2 reduced [2Fe-2S]-[ferredoxin] + 2 S-adenosyl-L-methionine = 2-methyladenosine(37) in tRNA + 5'-deoxyadenosine + L-methionine + 2 oxidized [2Fe-2S]-[ferredoxin] + S-adenosyl-L-homocysteine. Its function is as follows. Specifically methylates position 2 of adenine 2503 in 23S rRNA and position 2 of adenine 37 in tRNAs. m2A2503 modification seems to play a crucial role in the proofreading step occurring at the peptidyl transferase center and thus would serve to optimize ribosomal fidelity. The protein is Dual-specificity RNA methyltransferase RlmN of Psychrobacter sp. (strain PRwf-1).